A 209-amino-acid chain; its full sequence is Thiamine-phosphate synthase (209 aa).

4-amino-2-methyl-5-(diphosphooxymethyl)pyrimidine is bound by residues 36-40 and asparagine 68; that span reads QYRDK. The Mg(2+) site is built by aspartate 69 and aspartate 87. Threonine 106 lines the 4-amino-2-methyl-5-(diphosphooxymethyl)pyrimidine pocket. 133–135 is a binding site for 2-[(2R,5Z)-2-carboxy-4-methylthiazol-5(2H)-ylidene]ethyl phosphate; the sequence is SST. Lysine 136 provides a ligand contact to 4-amino-2-methyl-5-(diphosphooxymethyl)pyrimidine. Glycine 163 serves as a coordination point for 2-[(2R,5Z)-2-carboxy-4-methylthiazol-5(2H)-ylidene]ethyl phosphate.

The protein belongs to the thiamine-phosphate synthase family. Mg(2+) is required as a cofactor.

The catalysed reaction is 2-[(2R,5Z)-2-carboxy-4-methylthiazol-5(2H)-ylidene]ethyl phosphate + 4-amino-2-methyl-5-(diphosphooxymethyl)pyrimidine + 2 H(+) = thiamine phosphate + CO2 + diphosphate. It carries out the reaction 2-(2-carboxy-4-methylthiazol-5-yl)ethyl phosphate + 4-amino-2-methyl-5-(diphosphooxymethyl)pyrimidine + 2 H(+) = thiamine phosphate + CO2 + diphosphate. It catalyses the reaction 4-methyl-5-(2-phosphooxyethyl)-thiazole + 4-amino-2-methyl-5-(diphosphooxymethyl)pyrimidine + H(+) = thiamine phosphate + diphosphate. It participates in cofactor biosynthesis; thiamine diphosphate biosynthesis; thiamine phosphate from 4-amino-2-methyl-5-diphosphomethylpyrimidine and 4-methyl-5-(2-phosphoethyl)-thiazole: step 1/1. In terms of biological role, condenses 4-methyl-5-(beta-hydroxyethyl)thiazole monophosphate (THZ-P) and 2-methyl-4-amino-5-hydroxymethyl pyrimidine pyrophosphate (HMP-PP) to form thiamine monophosphate (TMP). The chain is Thiamine-phosphate synthase from Pseudomonas paraeruginosa (strain DSM 24068 / PA7) (Pseudomonas aeruginosa (strain PA7)).